The sequence spans 147 residues: Small ribosomal subunit protein uS5 (147 aa).

Residues 9-72 form the S5 DRBM domain; sequence FEEVVVNISR…DNAFKNITTV (64 aa).

Belongs to the universal ribosomal protein uS5 family. As to quaternary structure, part of the 30S ribosomal subunit. Contacts proteins S4 and S8.

Functionally, with S4 and S12 plays an important role in translational accuracy. Located at the back of the 30S subunit body where it stabilizes the conformation of the head with respect to the body. The polypeptide is Small ribosomal subunit protein uS5 (Nitratiruptor sp. (strain SB155-2)).